Consider the following 99-residue polypeptide: NADH-quinone oxidoreductase subunit K (99 aa).

The next 3 helical transmembrane spans lie at 3-23 (PANY…GVLL), 28-48 (IVMF…FVTF), and 59-79 (MIAF…LAII).

Belongs to the complex I subunit 4L family. NDH-1 is composed of 14 different subunits. Subunits NuoA, H, J, K, L, M, N constitute the membrane sector of the complex.

It is found in the cell membrane. It carries out the reaction a quinone + NADH + 5 H(+)(in) = a quinol + NAD(+) + 4 H(+)(out). In terms of biological role, NDH-1 shuttles electrons from NADH, via FMN and iron-sulfur (Fe-S) centers, to quinones in the respiratory chain. The immediate electron acceptor for the enzyme in this species is believed to be a menaquinone. Couples the redox reaction to proton translocation (for every two electrons transferred, four hydrogen ions are translocated across the cytoplasmic membrane), and thus conserves the redox energy in a proton gradient. This Mycobacterium bovis (strain ATCC BAA-935 / AF2122/97) protein is NADH-quinone oxidoreductase subunit K.